A 171-amino-acid chain; its full sequence is 3-hydroxydecanoyl-[acyl-carrier-protein] dehydratase (171 aa).

Residue histidine 70 is part of the active site.

The protein belongs to the thioester dehydratase family. FabA subfamily. Homodimer.

The protein localises to the cytoplasm. The catalysed reaction is a (3R)-hydroxyacyl-[ACP] = a (2E)-enoyl-[ACP] + H2O. It carries out the reaction (3R)-hydroxydecanoyl-[ACP] = (2E)-decenoyl-[ACP] + H2O. The enzyme catalyses (2E)-decenoyl-[ACP] = (3Z)-decenoyl-[ACP]. Its pathway is lipid metabolism; fatty acid biosynthesis. Functionally, necessary for the introduction of cis unsaturation into fatty acids. Catalyzes the dehydration of (3R)-3-hydroxydecanoyl-ACP to E-(2)-decenoyl-ACP and then its isomerization to Z-(3)-decenoyl-ACP. Can catalyze the dehydratase reaction for beta-hydroxyacyl-ACPs with saturated chain lengths up to 16:0, being most active on intermediate chain length. This chain is 3-hydroxydecanoyl-[acyl-carrier-protein] dehydratase, found in Pseudomonas fluorescens (strain SBW25).